A 203-amino-acid chain; its full sequence is Peroxiredoxin (203 aa).

Residues 3–156 form the Thioredoxin domain; that stretch reads VVLGQKAPDF…IIRVIKALQF (154 aa). Cys-44 functions as the Cysteine sulfenic acid (-SOH) intermediate in the catalytic mechanism. Position 119 (Arg-119) interacts with substrate.

Belongs to the peroxiredoxin family. Prx6 subfamily. Homodecamer. Pentamer of dimers that assemble into a ring structure.

It is found in the cytoplasm. It carries out the reaction a hydroperoxide + [thioredoxin]-dithiol = an alcohol + [thioredoxin]-disulfide + H2O. In terms of biological role, thiol-specific peroxidase that catalyzes the reduction of hydrogen peroxide and organic hydroperoxides to water and alcohols, respectively. Plays a role in cell protection against oxidative stress by detoxifying peroxides. In Thermoplasma volcanium (strain ATCC 51530 / DSM 4299 / JCM 9571 / NBRC 15438 / GSS1), this protein is Peroxiredoxin.